The sequence spans 448 residues: Senescence/dehydration-associated protein At4g35985, chloroplastic (448 aa).

The interval 1 to 36 (MECSATPPKLYPTVDTSTTVAPLPKSSSSSSSTNNN) is disordered. The N-terminal 56 residues, 1 to 56 (MECSATPPKLYPTVDTSTTVAPLPKSSSSSSSTNNNNLYPSINVNDLVNNIFPDPT), are a transit peptide targeting the chloroplast. Residues 26–36 (SSSSSSSTNNN) are compositionally biased toward low complexity. The Senescence domain maps to 248–416 (IAAGSGQLIK…AWTVFKIRQA (169 aa)). The segment at 422–448 (AMKPSSLAKTVVKTAAKERKKGKKSSK) is disordered. Over residues 439 to 448 (ERKKGKKSSK) the composition is skewed to basic residues.

As to expression, expressed in leaves (especially in midribs and trichomes), apical meristemic regions, stems, roots and flowers.

The protein localises to the plastid. The protein resides in the chloroplast. The sequence is that of Senescence/dehydration-associated protein At4g35985, chloroplastic from Arabidopsis thaliana (Mouse-ear cress).